Consider the following 629-residue polypeptide: Citrate (Re)-synthase (629 aa).

In terms of domain architecture, Pyruvate carboxyltransferase spans 59–329 (IFITDTTFRD…TNGIDTTVIT (271 aa)). Residues 497–601 (VMQRFIEEYP…GVDIRVEDLV (105 aa)) form the Cache domain.

This sequence belongs to the alpha-IPM synthase/homocitrate synthase family. Homotetramer. Co(2+) serves as cofactor. It depends on Mn(2+) as a cofactor.

The catalysed reaction is oxaloacetate + acetyl-CoA + H2O = citrate + CoA + H(+). Its activity is regulated as follows. Inhibited by p-hydroxymercuribenzoate and EDTA. In terms of biological role, catalyzes the condensation of the acetyl group of acetyl-CoA with oxaloacetate to form citrate. The polypeptide is Citrate (Re)-synthase (Syntrophus aciditrophicus (strain SB)).